A 122-amino-acid chain; its full sequence is MIQMQTYLTIADNTGGKVAQCIKVLGGSKRRYAKIGDIITIVVKQAIPNSSVKKGDVHKAVIVRTSKEVRRKNGTYVRFDDNACVILDANLSPRGKRVFGPVARELRDANFMKVVSLASEVI.

Belongs to the universal ribosomal protein uL14 family. In terms of assembly, part of the 50S ribosomal subunit. Forms a cluster with proteins L3 and L19. In the 70S ribosome, L14 and L19 interact and together make contacts with the 16S rRNA in bridges B5 and B8.

Binds to 23S rRNA. Forms part of two intersubunit bridges in the 70S ribosome. This is Large ribosomal subunit protein uL14 from Borreliella burgdorferi (strain ZS7) (Borrelia burgdorferi).